The following is a 114-amino-acid chain: Neurotrophic factor BDNF precursor form (114 aa).

Cystine bridges form between cysteine 14–cysteine 81, cysteine 59–cysteine 110, and cysteine 69–cysteine 112.

Belongs to the NGF-beta family. In terms of assembly, monomers and homodimers. Binds to NTRK2/TRKB. Can form heterodimers with other neurotrophin family members, such as NTF3 and NTF4 (in vitro), but the physiological relevance of this is not clear. BDNF precursor form: interacts with the heterodimer formed by NGFR and SORCS2. Mature BDNF has much lower affinity for the heterodimer formed by NGFR and SORCS2. In terms of processing, N-glycosylated and glycosulfated, contrary to mature BDNF. Post-translationally, mature BDNF is produced by proteolytic removal of the propeptide, catalyzed by a FURIN family member. In addition, the precursor form is proteolytically cleaved within the propeptide, but this is not an obligatory intermediate for the production of mature BDNF. Can be converted into mature BDNF by plasmin (PLG).

It localises to the secreted. Its function is as follows. Important signaling molecule that activates signaling cascades downstream of NTRK2. During development, promotes the survival and differentiation of selected neuronal populations of the peripheral and central nervous systems. Participates in axonal growth, pathfinding and in the modulation of dendritic growth and morphology. Major regulator of synaptic transmission and plasticity at adult synapses in many regions of the CNS. The versatility of BDNF is emphasized by its contribution to a range of adaptive neuronal responses including long-term potentiation (LTP), long-term depression (LTD), certain forms of short-term synaptic plasticity, as well as homeostatic regulation of intrinsic neuronal excitability. Functionally, important signaling molecule that activates signaling cascades downstream of NTRK2. Activates signaling cascades via the heterodimeric receptor formed by NGFR and SORCS2. Signaling via NGFR and SORCS2 plays a role in synaptic plasticity and long-term depression (LTD). Binding to NGFR and SORCS2 promotes neuronal apoptosis. Promotes neuronal growth cone collapse. In Macaca mulatta (Rhesus macaque), this protein is Neurotrophic factor BDNF precursor form (BDNF).